The primary structure comprises 330 residues: Phytanoyl-CoA hydroxylase-interacting protein (330 aa).

Residues 6 to 115 form the Fibronectin type-III domain; it reads TPHSIEVSNI…ETVEFCTGDY (110 aa). N-linked (GlcNAc...) asparagine glycosylation is found at Asn-14 and Asn-325.

It belongs to the PHYHIP family. As to quaternary structure, interacts with PHYH and ADGRB1.

In terms of biological role, its interaction with PHYH suggests a role in the development of the central system. This chain is Phytanoyl-CoA hydroxylase-interacting protein (PHYHIP), found in Bos taurus (Bovine).